A 212-amino-acid chain; its full sequence is Phosphatidylserine decarboxylase proenzyme (212 aa).

Catalysis depends on serine 182, which acts as the Schiff-base intermediate with substrate; via pyruvic acid. Residue serine 182 is modified to Pyruvic acid (Ser); by autocatalysis.

The protein belongs to the phosphatidylserine decarboxylase family. PSD-A subfamily. Heterodimer of a large membrane-associated beta subunit and a small pyruvoyl-containing alpha subunit. It depends on pyruvate as a cofactor. Is synthesized initially as an inactive proenzyme. Formation of the active enzyme involves a self-maturation process in which the active site pyruvoyl group is generated from an internal serine residue via an autocatalytic post-translational modification. Two non-identical subunits are generated from the proenzyme in this reaction, and the pyruvate is formed at the N-terminus of the alpha chain, which is derived from the carboxyl end of the proenzyme. The post-translation cleavage follows an unusual pathway, termed non-hydrolytic serinolysis, in which the side chain hydroxyl group of the serine supplies its oxygen atom to form the C-terminus of the beta chain, while the remainder of the serine residue undergoes an oxidative deamination to produce ammonia and the pyruvoyl prosthetic group on the alpha chain.

It is found in the cell membrane. It carries out the reaction a 1,2-diacyl-sn-glycero-3-phospho-L-serine + H(+) = a 1,2-diacyl-sn-glycero-3-phosphoethanolamine + CO2. Its pathway is phospholipid metabolism; phosphatidylethanolamine biosynthesis; phosphatidylethanolamine from CDP-diacylglycerol: step 2/2. Its function is as follows. Catalyzes the formation of phosphatidylethanolamine (PtdEtn) from phosphatidylserine (PtdSer). This Chlorobium luteolum (strain DSM 273 / BCRC 81028 / 2530) (Pelodictyon luteolum) protein is Phosphatidylserine decarboxylase proenzyme.